Here is a 422-residue protein sequence, read N- to C-terminus: Elongation factor 1-alpha (422 aa).

Residues 5–221 (KPHMNLAVIG…NNLKVPEKPS (217 aa)) enclose the tr-type G domain. The interval 14–21 (GHIDHGKS) is G1. 14-21 (GHIDHGKS) lines the GTP pocket. Position 21 (serine 21) interacts with Mg(2+). The segment at 70–74 (GITID) is G2. The tract at residues 91-94 (DCPG) is G3. GTP-binding positions include 91-95 (DCPGH) and 146-149 (NKMD). The segment at 146–149 (NKMD) is G4. Residues 185–187 (SAF) form a G5 region.

It belongs to the TRAFAC class translation factor GTPase superfamily. Classic translation factor GTPase family. EF-Tu/EF-1A subfamily.

Its subcellular location is the cytoplasm. It carries out the reaction GTP + H2O = GDP + phosphate + H(+). In terms of biological role, GTP hydrolase that promotes the GTP-dependent binding of aminoacyl-tRNA to the A-site of ribosomes during protein biosynthesis. This is Elongation factor 1-alpha from Methanosarcina barkeri (strain Fusaro / DSM 804).